Here is a 339-residue protein sequence, read N- to C-terminus: Serpentine receptor class gamma-7 (339 aa).

7 helical membrane-spanning segments follow: residues 30 to 50 (YWIQ…IIIT), 65 to 85 (WILT…LFVV), 98 to 118 (FSTI…IYNY), 152 to 172 (IPLF…NTVI), 200 to 220 (LHLT…LLLM), 239 to 259 (SIFI…YAFF), and 268 to 288 (FLVD…PLIF). The segment at 319–339 (PFNNTMPRQESPSPNYDSILA) is disordered.

This sequence belongs to the nematode receptor-like protein srg family.

It localises to the membrane. The sequence is that of Serpentine receptor class gamma-7 (srg-7) from Caenorhabditis elegans.